The sequence spans 354 residues: Biotin synthase (354 aa).

The region spanning N41–R268 is the Radical SAM core domain. The [4Fe-4S] cluster site is built by C56, C60, and C63. 4 residues coordinate [2Fe-2S] cluster: C100, C131, C191, and R263.

Belongs to the radical SAM superfamily. Biotin synthase family. In terms of assembly, homodimer. Requires [4Fe-4S] cluster as cofactor. [2Fe-2S] cluster is required as a cofactor.

It catalyses the reaction (4R,5S)-dethiobiotin + (sulfur carrier)-SH + 2 reduced [2Fe-2S]-[ferredoxin] + 2 S-adenosyl-L-methionine = (sulfur carrier)-H + biotin + 2 5'-deoxyadenosine + 2 L-methionine + 2 oxidized [2Fe-2S]-[ferredoxin]. The protein operates within cofactor biosynthesis; biotin biosynthesis; biotin from 7,8-diaminononanoate: step 2/2. Its function is as follows. Catalyzes the conversion of dethiobiotin (DTB) to biotin by the insertion of a sulfur atom into dethiobiotin via a radical-based mechanism. In Shewanella amazonensis (strain ATCC BAA-1098 / SB2B), this protein is Biotin synthase.